A 444-amino-acid polypeptide reads, in one-letter code: Phosphoglucosamine mutase (444 aa).

S102 acts as the Phosphoserine intermediate in catalysis. Positions 102, 241, 243, and 245 each coordinate Mg(2+). A Phosphoserine modification is found at S102.

It belongs to the phosphohexose mutase family. Mg(2+) is required as a cofactor. Activated by phosphorylation.

The catalysed reaction is alpha-D-glucosamine 1-phosphate = D-glucosamine 6-phosphate. Catalyzes the conversion of glucosamine-6-phosphate to glucosamine-1-phosphate. In Histophilus somni (strain 2336) (Haemophilus somnus), this protein is Phosphoglucosamine mutase.